The following is a 241-amino-acid chain: NADPH-dependent FMN reductase ArsH (241 aa).

43 to 50 (SLRTVSYS) serves as a coordination point for FMN.

The protein belongs to the ArsH family. In terms of assembly, homotetramer. It depends on FMN as a cofactor.

Its function is as follows. Has NADPH-dependent FMN reductase activity. No activity with NADH. May play a role in resistance to heavy metal toxicity. The polypeptide is NADPH-dependent FMN reductase ArsH (Rhizobium meliloti (strain 1021) (Ensifer meliloti)).